The following is a 504-amino-acid chain: Maturase K (504 aa).

The protein belongs to the intron maturase 2 family. MatK subfamily.

The protein resides in the plastid. Its subcellular location is the chloroplast. In terms of biological role, usually encoded in the trnK tRNA gene intron. Probably assists in splicing its own and other chloroplast group II introns. The chain is Maturase K from Aucuba japonica (Japanese laurel).